Reading from the N-terminus, the 632-residue chain is ATP-dependent DNA helicase RecQ (632 aa).

One can recognise a Helicase ATP-binding domain in the interval 47–215 (IDATLMGKDS…LRHLNLQSPH (169 aa)). 60 to 67 (MATGNGKS) contributes to the ATP binding site. The short motif at 159–162 (DEAH) is the DEAH box element. The Helicase C-terminal domain maps to 236-385 (PMEQLCRFVL…IEALKLQAIG (150 aa)). Residues Cys-393, Cys-410, Cys-413, and Cys-416 each coordinate Zn(2+). The 81-residue stretch at 544–624 (AQYDKDLFAR…QQHKKVLTQH (81 aa)) folds into the HRDC domain.

The protein belongs to the helicase family. RecQ subfamily. The cofactor is Mg(2+). Zn(2+) is required as a cofactor.

It catalyses the reaction Couples ATP hydrolysis with the unwinding of duplex DNA by translocating in the 3'-5' direction.. The enzyme catalyses ATP + H2O = ADP + phosphate + H(+). Functionally, an ATP-dependent DNA helicase which unwinds DNA in a 3'-5' direction. Plays a role in recombination. The sequence is that of ATP-dependent DNA helicase RecQ from Pasteurella multocida (strain Pm70).